A 288-amino-acid polypeptide reads, in one-letter code: HTH-type transcriptional repressor CarA (288 aa).

The HTH merR-type domain maps to 2–73 (TLRIRTIARM…VSEAIAQVKT (72 aa)). The H-T-H motif DNA-binding region spans 5–24 (IRTIARMTGIREATLRAWER). One can recognise a B12-binding domain in the interval 162–288 (GPRALLACPS…NQVRNAQNRP (127 aa)).

The protein belongs to the CarA/CarH B12-binding photoregulator family. Forms homodimers or oligomers. Interacts with CarS.

Its activity is regulated as follows. Binds cobalamin (vitamin B12), but cobalamin is not required for CarA activity. Interaction with CarS prevents binding to DNA. In terms of biological role, negative regulator of the carB operon in the dark. Binds specifically to the CarA operator, in the region around the carB promoter, which blocks access to the RNA polymerase. The sequence is that of HTH-type transcriptional repressor CarA (carA) from Myxococcus xanthus.